A 479-amino-acid polypeptide reads, in one-letter code: Glycogen synthase (479 aa).

Lys-15 is a binding site for ADP-alpha-D-glucose.

It belongs to the glycosyltransferase 1 family. Bacterial/plant glycogen synthase subfamily.

The enzyme catalyses [(1-&gt;4)-alpha-D-glucosyl](n) + ADP-alpha-D-glucose = [(1-&gt;4)-alpha-D-glucosyl](n+1) + ADP + H(+). It functions in the pathway glycan biosynthesis; glycogen biosynthesis. Synthesizes alpha-1,4-glucan chains using ADP-glucose. The polypeptide is Glycogen synthase (Clostridium novyi (strain NT)).